A 190-amino-acid polypeptide reads, in one-letter code: Peptidyl-tRNA hydrolase (190 aa).

F14 is a tRNA binding site. The active-site Proton acceptor is H19. 3 residues coordinate tRNA: M64, N66, and N112.

The protein belongs to the PTH family. Monomer.

The protein localises to the cytoplasm. It catalyses the reaction an N-acyl-L-alpha-aminoacyl-tRNA + H2O = an N-acyl-L-amino acid + a tRNA + H(+). Its function is as follows. Hydrolyzes ribosome-free peptidyl-tRNAs (with 1 or more amino acids incorporated), which drop off the ribosome during protein synthesis, or as a result of ribosome stalling. In terms of biological role, catalyzes the release of premature peptidyl moieties from peptidyl-tRNA molecules trapped in stalled 50S ribosomal subunits, and thus maintains levels of free tRNAs and 50S ribosomes. In Staphylococcus aureus (strain bovine RF122 / ET3-1), this protein is Peptidyl-tRNA hydrolase.